The primary structure comprises 328 residues: DNA-directed RNA polymerase subunit alpha (328 aa).

Residues 1–234 (MVREKVKVST…DLFIPFLQAE (234 aa)) form an alpha N-terminal domain (alpha-NTD) region. Residues 268 to 328 (IALKSIFIDQ…KQIMSILEKK (61 aa)) form an alpha C-terminal domain (alpha-CTD) region.

The protein belongs to the RNA polymerase alpha chain family. In terms of assembly, in plastids the minimal PEP RNA polymerase catalytic core is composed of four subunits: alpha, beta, beta', and beta''. When a (nuclear-encoded) sigma factor is associated with the core the holoenzyme is formed, which can initiate transcription.

The protein resides in the plastid. Its subcellular location is the chloroplast. It catalyses the reaction RNA(n) + a ribonucleoside 5'-triphosphate = RNA(n+1) + diphosphate. In terms of biological role, DNA-dependent RNA polymerase catalyzes the transcription of DNA into RNA using the four ribonucleoside triphosphates as substrates. The polypeptide is DNA-directed RNA polymerase subunit alpha (Citrus sinensis (Sweet orange)).